The chain runs to 414 residues: Voltage-gated ClC-type chloride channel ClcB (414 aa).

The next 11 helical transmembrane spans lie at 5-25 (LVIS…FHQA), 54-74 (ALTP…YQRY), 116-136 (SAIG…SVFA), 147-167 (LWVA…PLAG), 169-189 (LFIA…PVVI), 220-240 (VQYF…PLFL), 255-275 (LLPP…SLIF), 292-312 (TPPG…AVLA), 327-347 (LFVG…WPVL), 353-373 (LLMA…APIM), and 381-401 (MTGE…ATTI).

It belongs to the chloride channel (TC 2.A.49) family. ClcB subfamily.

The protein localises to the cell inner membrane. Its function is as follows. Probably acts as an electrical shunt for an outwardly-directed proton pump that is linked to amino acid decarboxylation, as part of the extreme acid resistance (XAR) response. This is Voltage-gated ClC-type chloride channel ClcB from Yersinia pestis.